The sequence spans 144 residues: Interleukin-9 (144 aa).

Positions 1-18 (MLVTYILASVLLFSSVLG) are cleaved as a signal peptide. Q19 carries the post-translational modification Pyrrolidone carboxylic acid. N50, N78, N101, and N114 each carry an N-linked (GlcNAc...) asparagine glycan.

This sequence belongs to the IL-7/IL-9 family. Interacts with IL9R. Interacts with IL2RG.

The protein localises to the secreted. Its function is as follows. Multifunctional cytokine secreted mainly by T-helper 2 lymphocytes and also mast cells or NKT cells that plays important roles in the immune response against parasites. Affects intestinal epithelial permeability and adaptive immunity. In addition, induces the differentiation of specific T-cell subsets such as IL-17 producing helper T-cells (TH17) and also proliferation and differentiation of mast cells. Mechanistically, exerts its biological effects through a receptor composed of IL9R subunit and a signal transducing subunit IL2RG. Receptor stimulation results in the rapid activation of JAK1 and JAK3 kinase activities leading to STAT1, STAT3 and STAT5-mediated transcriptional programs. Induction of differentiation genes seems to be mediated by STAT1 alone, while protection of cells from apoptosis depends on STAT3 and STAT5. In Mus musculus (Mouse), this protein is Interleukin-9 (Il9).